The following is a 333-amino-acid chain: Bifunctional phosphoglucose/phosphomannose isomerase (333 aa).

An SIS domain is found at 22–160 (LEGALEGVEE…SGALGVDLEA (139 aa)). D-fructose 6-phosphate-binding residues include glycine 39, serine 40, serine 84, serine 86, threonine 89, and arginine 136. Glutamate 211 serves as the catalytic Proton acceptor. Residues histidine 227 and lysine 322 each coordinate D-fructose 6-phosphate. Residue histidine 227 is the Proton donor of the active site. The active-site Proton acceptor is lysine 322.

It belongs to the PGI/PMI family. As to quaternary structure, homodimer.

The catalysed reaction is alpha-D-glucose 6-phosphate = beta-D-fructose 6-phosphate. It catalyses the reaction D-mannose 6-phosphate = D-fructose 6-phosphate. Its activity is regulated as follows. Inhibited by low concentrations of erythrose 4-phosphate and 6-phosphogluconate. Functionally, dual specificity isomerase that catalyzes the isomerization of both glucose-6-phosphate and mannose-6-phosphate to fructose-6-phosphate with similar catalytic efficiency. The polypeptide is Bifunctional phosphoglucose/phosphomannose isomerase (Aeropyrum pernix (strain ATCC 700893 / DSM 11879 / JCM 9820 / NBRC 100138 / K1)).